Reading from the N-terminus, the 690-residue chain is MNIDNELSKCRNIGIMAHIDAGKTTTTERILFYTGKQNRIGEVHEGAASMDWMEQEKERGITITSAATTCFWNGHRINIIDTPGHVDFTIEVERSLRVLDGAVAVFDGVAGVEPQSETVWRQADKYNVPRICFMNKMDRMGADFYRCVDMLVDRLGATPLVLQLPIGSEKDFVGVVDLLEMRSIIWDEDSLGASFHYGEIPKDMIDKAQEYRNKLLESAVELNDEAMNLYFEGKEISVSLLKSCIRTGVIQSKFVPVLCGSAFKNRGVQPLLDAVVDFLPAPNDIPVIEALDVKTSNTINVKTSAGGKFVALAFKVMTDKFVGSLTFIRIYSGKLSSKTTVLNAVKDSTESIGRILLMHANNREDITEAQAGDIVALAGLKKTVTGDTLCALDYPVILERMEFPEPVMEIAVEPKSTADQEKMGIALSRLVAEDPSLGMYVNPESGQTILKGMGELHLEVIVDRMRREFNVEANIGAPQVAYRETITKSVEIEYIHKKQTGGAGQFAKVNILFEPLPPGSGFQFESKITGGAIPKEYIPGVQSGLENIRGSGMLAGFPVIDFKATLFDGAFHEVDSSPLAFELAAKGAFRDMVNKAGAILLEPIMKVEIITPDEYMGDVIGDINSRRGRVAEMQDRHNTKVILAFIPLAKMFGYVKDLRSMSQGRAQYSMYFSCYEQVPDNIVANEIKTK.

One can recognise a tr-type G domain in the interval 8 to 283 (SKCRNIGIMA…AVVDFLPAPN (276 aa)). Residues 17–24 (AHIDAGKT), 81–85 (DTPGH), and 135–138 (NKMD) contribute to the GTP site.

Belongs to the TRAFAC class translation factor GTPase superfamily. Classic translation factor GTPase family. EF-G/EF-2 subfamily.

It is found in the cytoplasm. Its function is as follows. Catalyzes the GTP-dependent ribosomal translocation step during translation elongation. During this step, the ribosome changes from the pre-translocational (PRE) to the post-translocational (POST) state as the newly formed A-site-bound peptidyl-tRNA and P-site-bound deacylated tRNA move to the P and E sites, respectively. Catalyzes the coordinated movement of the two tRNA molecules, the mRNA and conformational changes in the ribosome. This is Elongation factor G from Ehrlichia canis (strain Jake).